The primary structure comprises 64 residues: Conotoxin Ts-011 (64 aa).

The N-terminal stretch at 1–22 (MHCLPVLVILLLLIASTPSVDA) is a signal peptide. A propeptide spanning residues 23 to 52 (RPKTKDDVPPASFHGADDANRILQTLWNLR) is cleaved from the precursor. Ile-63 bears the Isoleucine amide mark.

It belongs to the conotoxin T superfamily. Contains 2 disulfide bonds that can be either 'C1-C3, C2-C4' or 'C1-C4, C2-C3', since these disulfide connectivities have been observed for conotoxins with cysteine framework V (for examples, see AC P0DQQ7 and AC P81755). Expressed by the venom duct.

Its subcellular location is the secreted. The sequence is that of Conotoxin Ts-011 from Conus tessulatus (Tessellate cone).